We begin with the raw amino-acid sequence, 95 residues long: Aspartyl/glutamyl-tRNA(Asn/Gln) amidotransferase subunit C (95 aa).

Belongs to the GatC family. As to quaternary structure, heterotrimer of A, B and C subunits.

It catalyses the reaction L-glutamyl-tRNA(Gln) + L-glutamine + ATP + H2O = L-glutaminyl-tRNA(Gln) + L-glutamate + ADP + phosphate + H(+). It carries out the reaction L-aspartyl-tRNA(Asn) + L-glutamine + ATP + H2O = L-asparaginyl-tRNA(Asn) + L-glutamate + ADP + phosphate + 2 H(+). Functionally, allows the formation of correctly charged Asn-tRNA(Asn) or Gln-tRNA(Gln) through the transamidation of misacylated Asp-tRNA(Asn) or Glu-tRNA(Gln) in organisms which lack either or both of asparaginyl-tRNA or glutaminyl-tRNA synthetases. The reaction takes place in the presence of glutamine and ATP through an activated phospho-Asp-tRNA(Asn) or phospho-Glu-tRNA(Gln). The polypeptide is Aspartyl/glutamyl-tRNA(Asn/Gln) amidotransferase subunit C (Rhodopseudomonas palustris (strain BisB18)).